Reading from the N-terminus, the 31-residue chain is Cytochrome b6-f complex subunit 6 (31 aa).

Residues Ile4–Gly24 traverse the membrane as a helical segment.

Belongs to the PetL family. In terms of assembly, the 4 large subunits of the cytochrome b6-f complex are cytochrome b6, subunit IV (17 kDa polypeptide, PetD), cytochrome f and the Rieske protein, while the 4 small subunits are PetG, PetL, PetM and PetN. The complex functions as a dimer.

It localises to the plastid. The protein localises to the chloroplast thylakoid membrane. Functionally, component of the cytochrome b6-f complex, which mediates electron transfer between photosystem II (PSII) and photosystem I (PSI), cyclic electron flow around PSI, and state transitions. PetL is important for photoautotrophic growth as well as for electron transfer efficiency and stability of the cytochrome b6-f complex. The protein is Cytochrome b6-f complex subunit 6 of Gossypium hirsutum (Upland cotton).